The chain runs to 172 residues: 3-hydroxydecanoyl-[acyl-carrier-protein] dehydratase (172 aa).

The active site involves His71.

It belongs to the thioester dehydratase family. FabA subfamily. In terms of assembly, homodimer.

Its subcellular location is the cytoplasm. It catalyses the reaction a (3R)-hydroxyacyl-[ACP] = a (2E)-enoyl-[ACP] + H2O. The enzyme catalyses (3R)-hydroxydecanoyl-[ACP] = (2E)-decenoyl-[ACP] + H2O. The catalysed reaction is (2E)-decenoyl-[ACP] = (3Z)-decenoyl-[ACP]. The protein operates within lipid metabolism; fatty acid biosynthesis. Its function is as follows. Necessary for the introduction of cis unsaturation into fatty acids. Catalyzes the dehydration of (3R)-3-hydroxydecanoyl-ACP to E-(2)-decenoyl-ACP and then its isomerization to Z-(3)-decenoyl-ACP. Can catalyze the dehydratase reaction for beta-hydroxyacyl-ACPs with saturated chain lengths up to 16:0, being most active on intermediate chain length. The polypeptide is 3-hydroxydecanoyl-[acyl-carrier-protein] dehydratase (Escherichia coli O139:H28 (strain E24377A / ETEC)).